Consider the following 443-residue polypeptide: 3-phosphoshikimate 1-carboxyvinyltransferase (443 aa).

3-phosphoshikimate-binding residues include K24, S25, and R29. K24 is a phosphoenolpyruvate binding site. Residues G96 and R124 each coordinate phosphoenolpyruvate. S168, Q170, D316, and K343 together coordinate 3-phosphoshikimate. Residue Q170 participates in phosphoenolpyruvate binding. D316 serves as the catalytic Proton acceptor. Residues R347 and R391 each coordinate phosphoenolpyruvate.

Belongs to the EPSP synthase family. As to quaternary structure, monomer.

The protein localises to the cytoplasm. The enzyme catalyses 3-phosphoshikimate + phosphoenolpyruvate = 5-O-(1-carboxyvinyl)-3-phosphoshikimate + phosphate. It functions in the pathway metabolic intermediate biosynthesis; chorismate biosynthesis; chorismate from D-erythrose 4-phosphate and phosphoenolpyruvate: step 6/7. Its function is as follows. Catalyzes the transfer of the enolpyruvyl moiety of phosphoenolpyruvate (PEP) to the 5-hydroxyl of shikimate-3-phosphate (S3P) to produce enolpyruvyl shikimate-3-phosphate and inorganic phosphate. The protein is 3-phosphoshikimate 1-carboxyvinyltransferase of Dichelobacter nodosus (Bacteroides nodosus).